A 1324-amino-acid polypeptide reads, in one-letter code: Mediator of RNA polymerase II transcription subunit 13 (1324 aa).

Disordered regions lie at residues 296-346 (ESGV…PPEA), 386-455 (FFDD…ATTA), 535-590 (GRFF…EPEI), 607-631 (HDDK…SNNS), 694-816 (KGGQ…VPSA), and 1151-1198 (TGSD…PDIY). The segment covering 298 to 331 (GVNTNESTAAQPQPAQNGTNSMAPAAGTTNATTQ) has biased composition (polar residues). Residues 398 to 407 (DGDNDNGNDN) are compositionally biased toward acidic residues. Over residues 408–442 (DNDKADAMDVDVKEEAKKEEMIKKETKEEVPVKEE) the composition is skewed to basic and acidic residues. The span at 546 to 566 (DNEGSSDNTGDSSDSGDGSES) shows a compositional bias: low complexity. Basic and acidic residues-rich tracts occupy residues 567–578 (VPRDVKRQKVDE) and 607–617 (HDDKPAKKIDS). Composition is skewed to low complexity over residues 618-631 (SNDT…SNNS) and 724-743 (SNAS…QMGA). Positions 750 to 784 (LSPSRGATPQPEGSSPETRPSNWTPGITSQVNSAA) are enriched in polar residues. Low complexity-rich tracts occupy residues 785–816 (SSPV…VPSA) and 1172–1184 (TGAA…GSAP).

It belongs to the Mediator complex subunit 13 family. Component of the SRB8-11 complex, which itself associates with the Mediator complex.

It localises to the nucleus. In terms of biological role, component of the SRB8-11 complex. The SRB8-11 complex is a regulatory module of the Mediator complex which is itself involved in regulation of basal and activated RNA polymerase II-dependent transcription. The SRB8-11 complex may be involved in the transcriptional repression of a subset of genes regulated by Mediator. It may inhibit the association of the Mediator complex with RNA polymerase II to form the holoenzyme complex. The chain is Mediator of RNA polymerase II transcription subunit 13 (SSN2) from Yarrowia lipolytica (strain CLIB 122 / E 150) (Yeast).